We begin with the raw amino-acid sequence, 105 residues long: uncharacterized protein (105 aa).

The next 2 membrane-spanning stretches (helical) occupy residues 56–76 (ALIW…VLII) and 85–105 (INLN…GVFY).

It is found in the membrane. This is an uncharacterized protein from Aedes vexans (Inland floodwater mosquito).